The sequence spans 221 residues: MSGVFIVFEGIDGAGKTTQLAYLHEALLSMRNHRVLVTREPGGTRIGEAVRRVLLDTGNSEMTGETEALLYAAARSQFTAEVVRPALARGEIVLSDRFLDSSLAYQGFGRGLELHRLRQVNFLATGGLRPDLTVLLDLPVAAAVARMDPDRRDRLEREGVDFFERVRRGYLELASADPGHYLIVNAEREAGVCASAIWARVRALLQDRPTFGGCPGLDGGS.

10-17 contributes to the ATP binding site; sequence GIDGAGKT.

It belongs to the thymidylate kinase family.

It catalyses the reaction dTMP + ATP = dTDP + ADP. In terms of biological role, phosphorylation of dTMP to form dTDP in both de novo and salvage pathways of dTTP synthesis. This Desulforudis audaxviator (strain MP104C) protein is Thymidylate kinase.